A 169-amino-acid polypeptide reads, in one-letter code: 16S rRNA aminocarboxypropyltransferase (169 aa).

Positions 17, 67, 90, and 109 each coordinate S-adenosyl-L-methionine.

It belongs to the TDD superfamily. TSR3 family.

Its subcellular location is the cytoplasm. It catalyses the reaction an N(1)-methylpseudouridine in rRNA + S-adenosyl-L-methionine = N(1)-methyl-N(3)-[(3S)-3-amino-3-carboxypropyl]pseudouridine in rRNA + S-methyl-5'-thioadenosine + H(+). In terms of biological role, aminocarboxypropyltransferase that catalyzes the aminocarboxypropyl transfer on pseudouridine corresponding to position 914 in M.jannaschii 16S rRNA. It constitutes the last step in biosynthesis of the hypermodified N1-methyl-N3-(3-amino-3-carboxypropyl) pseudouridine (m1acp3-Psi). The protein is 16S rRNA aminocarboxypropyltransferase of Methanothermobacter thermautotrophicus (strain ATCC 29096 / DSM 1053 / JCM 10044 / NBRC 100330 / Delta H) (Methanobacterium thermoautotrophicum).